The sequence spans 637 residues: GTP-binding protein 4 (637 aa).

Residue Ala-2 is modified to N-acetylalanine. An N6-acetyllysine; alternate modification is found at Lys-103. Lys-103 is covalently cross-linked (Glycyl lysine isopeptide (Lys-Gly) (interchain with G-Cter in SUMO2); alternate). Position 122 is a phosphoserine (Ser-122). One can recognise an OBG-type G domain in the interval 169–340 (RTLLLCGYPN…VKTEACDRLL (172 aa)). Residues 175 to 182 (GYPNVGKS), 221 to 225 (DTPGI), and 289 to 292 (SKCE) each bind GTP. Residue Lys-332 forms a Glycyl lysine isopeptide (Lys-Gly) (interchain with G-Cter in SUMO2) linkage. Disordered stretches follow at residues 499–518 (SKEK…KVQR) and 525–637 (MRSL…KERR). Lys-535 participates in a covalent cross-link: Glycyl lysine isopeptide (Lys-Gly) (interchain with G-Cter in SUMO2). Basic residues predominate over residues 542–555 (VRARRSRSVTRKRK). A Phosphoserine modification is found at Ser-559. Residues 563-574 (SSIARSRSRSCS) are compositionally biased toward low complexity. The segment covering 576–588 (TPRDVSGLRDVKM) has biased composition (basic and acidic residues). The span at 589–607 (VKKAKTMMKKAQKKMNRLG) shows a compositional bias: basic residues. Basic and acidic residues predominate over residues 608–621 (KKGEADRHVFDMKP). Basic residues predominate over residues 622 to 637 (KHLLSGKRKAGKKERR).

This sequence belongs to the TRAFAC class OBG-HflX-like GTPase superfamily. OBG GTPase family. NOG subfamily. In terms of assembly, associates with pre-60S ribosomal particles. Interacts with MINAS-60 (product of an alternative open reading frame of RBM10).

The protein localises to the nucleus. It localises to the nucleolus. Functionally, involved in the biogenesis of the 60S ribosomal subunit. Acts as TP53 repressor, preventing TP53 stabilization and cell cycle arrest. The chain is GTP-binding protein 4 (Gtpbp4) from Rattus norvegicus (Rat).